Consider the following 246-residue polypeptide: MAGYLKLVCVSFQRQGFHTVGSRCKNRTGAEHLWLTRHLRDPFVKAAKVESYRCRSAFKLLEVNERHQILRPGLRVLDCGAAPGAWSQVAVQKVNAAGTDPSSPVGFVLGVDLLHIFPLEGATFLCPADVTDPRTSQRILEVLPGRRADVILSDMAPNATGFRDLDHDRLISLCLTLLSVTPDILQPGGTFLCKTWAGSQSRRLQRRLTEEFQNVRIIKPEASRKESSEVYFLATQYHGRKGTVKQ.

Residues 1–18 (MAGYLKLVCVSFQRQGFH) constitute a mitochondrion transit peptide. Residues 83 to 86 (PGAW), aspartate 112, 129 to 130 (DV), and aspartate 154 contribute to the S-adenosyl-L-methionine site. Catalysis depends on lysine 194, which acts as the Proton acceptor.

This sequence belongs to the class I-like SAM-binding methyltransferase superfamily. RNA methyltransferase RlmE family. In terms of tissue distribution, widely expressed, with highest expression in muscle, placenta, and heart.

It is found in the mitochondrion. The enzyme catalyses uridine(1369) in 16S rRNA + S-adenosyl-L-methionine = 2'-O-methyluridine(1369) in 16S rRNA + S-adenosyl-L-homocysteine + H(+). In terms of biological role, S-adenosyl-L-methionine-dependent 2'-O-ribose methyltransferase that catalyzes the formation of 2'-O-methyluridine at position 1369 (Um1369) in the 16S mitochondrial large subunit ribosomal RNA (mtLSU rRNA), a universally conserved modification in the peptidyl transferase domain of the mtLSU rRNA. This activity may require prior 2'-O-methylguanosine modification at position 1370 (Gm1370) by MRM3. Essential for late-stage assembly of mtLSU required for efficient translation of mitochondrial DNA encoded proteins; methyltransferase activity is not required for this function. Essential for mitochondrial respiratory function. In Homo sapiens (Human), this protein is rRNA methyltransferase 2, mitochondrial.